The sequence spans 343 residues: Ribosome production factor 1 (343 aa).

Composition is skewed to basic and acidic residues over residues 1-10 and 82-91; these read MAEKKGPEAK and EREALGDKAP. Disordered regions lie at residues 1 to 51 and 77 to 97; these read MAEK…LSEI and KKRK…PVPK. Residues 136-319 form the Brix domain; that stretch reads PKILITTSDR…LRSLQKGTFD (184 aa). The segment at 297–314 is RNA-binding; sequence VGIQELGPRFTLKLRSLQ.

The protein resides in the nucleus. The protein localises to the nucleolus. Functionally, may be required for ribosome biogenesis. The sequence is that of Ribosome production factor 1 (rpf1) from Xenopus laevis (African clawed frog).